Consider the following 115-residue polypeptide: DNA-binding protein PH1060 (115 aa).

The protein belongs to the PDCD5 family.

This Pyrococcus horikoshii (strain ATCC 700860 / DSM 12428 / JCM 9974 / NBRC 100139 / OT-3) protein is DNA-binding protein PH1060.